Here is a 521-residue protein sequence, read N- to C-terminus: MAAVEEAQFWQAIGILIKNYHALNKKIFEVVITQVTKQQNGRVCESSAEELAMSLKEDPSQRTCTGFTIGFKLLSKKLAENILGTGIVDFENCLYECQFASDSIEGFSVGLLGGEFKLKSKSNTNWLEFVLRPKLLSWSQSKQDEAKVKSLGLVNVEKYNDLYKELKQRHSQRLLEHWKTAQESTDPLKFIYEDLAIAAYLIVLWSQTQSEPTAFADLGCGNGLLVHVLNAEGYKGYGYDIRKRKLWSLYPPDTQRSLIEKAVEPNSFRLDFPGVDWLIGNHSDELSPWLPVLAGRLNINYFLLPCCPFELSGAKFRRRNTKISAYQDFFQYVTQVSHECGYEILQDRLKIPSTKRLALLGIKRKASKAIEDLEYFVQEELRKYKTGDAKIKLREKEESVRNCTQVDKTIIDGLVFKIFKLILDSNEDKWSGRLPMREIAQALTKEELSGIKSECGGIKTLLRNKHEVFEFCGGDLIGIRTPKPTATLPKSHLTIKKRSCFFKLHHPLGCPLDDAECSFIH.

It belongs to the TRM44 family.

It is found in the cytoplasm. It carries out the reaction uridine(44) in tRNA(Ser) + S-adenosyl-L-methionine = 2'-O-methyluridine(44) in tRNA(Ser) + S-adenosyl-L-homocysteine + H(+). Its function is as follows. Probable adenosyl-L-methionine (AdoMet)-dependent tRNA (uracil-O(2)-)-methyltransferase. The chain is Probable tRNA (uracil-O(2)-)-methyltransferase (trmt44) from Drosophila melanogaster (Fruit fly).